The primary structure comprises 750 residues: Pesticidal crystal protein Cry11Bb (750 aa).

Residues 672-750 (QGYNDNYNQN…NYNQNTSSGV (79 aa)) are disordered.

This sequence belongs to the delta endotoxin family.

In terms of biological role, promotes colloidosmotic lysis by binding to the midgut epithelial cells of mosquito larvae such as Aedes aegypti, Anopheles albimanus and Culex quinquefasciatus. In Bacillus thuringiensis subsp. medellin, this protein is Pesticidal crystal protein Cry11Bb (cry11Bb).